A 143-amino-acid polypeptide reads, in one-letter code: Holo-[acyl-carrier-protein] synthase (143 aa).

Residues D9 and E63 each coordinate Mg(2+).

The protein belongs to the P-Pant transferase superfamily. AcpS family. The cofactor is Mg(2+).

It is found in the cytoplasm. It catalyses the reaction apo-[ACP] + CoA = holo-[ACP] + adenosine 3',5'-bisphosphate + H(+). Its function is as follows. Transfers the 4'-phosphopantetheine moiety from coenzyme A to a Ser of acyl-carrier-protein. This is Holo-[acyl-carrier-protein] synthase from Burkholderia pseudomallei (strain 1106a).